The primary structure comprises 440 residues: Proline--tRNA ligase (440 aa).

Belongs to the class-II aminoacyl-tRNA synthetase family. ProS type 2 subfamily. Homodimer.

The protein localises to the cytoplasm. The catalysed reaction is tRNA(Pro) + L-proline + ATP = L-prolyl-tRNA(Pro) + AMP + diphosphate. In terms of biological role, catalyzes the attachment of proline to tRNA(Pro) in a two-step reaction: proline is first activated by ATP to form Pro-AMP and then transferred to the acceptor end of tRNA(Pro). The protein is Proline--tRNA ligase of Rhizobium etli (strain ATCC 51251 / DSM 11541 / JCM 21823 / NBRC 15573 / CFN 42).